We begin with the raw amino-acid sequence, 242 residues long: Octanoyltransferase (242 aa).

Residues 31–206 (SQTTDEIWFL…LFLKNFGYNQ (176 aa)) form the BPL/LPL catalytic domain. Substrate is bound by residues 70 to 77 (RGGQVTYH), 137 to 139 (SIG), and 150 to 152 (GLA). C168 (acyl-thioester intermediate) is an active-site residue.

It belongs to the LipB family.

It localises to the cytoplasm. The enzyme catalyses octanoyl-[ACP] + L-lysyl-[protein] = N(6)-octanoyl-L-lysyl-[protein] + holo-[ACP] + H(+). Its pathway is protein modification; protein lipoylation via endogenous pathway; protein N(6)-(lipoyl)lysine from octanoyl-[acyl-carrier-protein]: step 1/2. Its function is as follows. Catalyzes the transfer of endogenously produced octanoic acid from octanoyl-acyl-carrier-protein onto the lipoyl domains of lipoate-dependent enzymes. Lipoyl-ACP can also act as a substrate although octanoyl-ACP is likely to be the physiological substrate. The polypeptide is Octanoyltransferase (Coxiella burnetii (strain Dugway 5J108-111)).